A 607-amino-acid polypeptide reads, in one-letter code: Chaperone protein dnaK (607 aa).

The segment covering 579–591 (KASETSNAKTNGK) has biased composition (polar residues). The segment at 579 to 607 (KASETSNAKTNGKASEKEDVIDADFKAQE) is disordered. Positions 592–607 (ASEKEDVIDADFKAQE) are enriched in basic and acidic residues.

This sequence belongs to the heat shock protein 70 family.

Its subcellular location is the plastid. The protein localises to the chloroplast. Its function is as follows. Acts as a chaperone. The protein is Chaperone protein dnaK of Cyanidioschyzon merolae (strain NIES-3377 / 10D) (Unicellular red alga).